The chain runs to 164 residues: Pyruvoyl-dependent arginine decarboxylase (164 aa).

Position 52 is a pyruvic acid (Ser) (serine 52).

The protein belongs to the PdaD family. It depends on pyruvate as a cofactor.

The enzyme catalyses L-arginine + H(+) = agmatine + CO2. In Methanococcus maripaludis (strain C7 / ATCC BAA-1331), this protein is Pyruvoyl-dependent arginine decarboxylase.